A 393-amino-acid chain; its full sequence is Staphopain B (393 aa).

A signal peptide spans 1–36 (MNSSCKTRVFNIISIIMVSMLILSLGAFANNNKAKA). Residues 37–219 (DSHSKQLEIN…KVEENEAIQE (183 aa)) constitute a propeptide that is removed on maturation. Catalysis depends on residues cysteine 243, histidine 340, and asparagine 360.

It belongs to the peptidase C47 family. In the cytoplasm, prematurely activated/folded SspB forms a stable non-covalent complex with SspC. In terms of processing, proteolytically cleaved by staphylococcal serine protease (SspA).

Its subcellular location is the secreted. Prematurely activated/folded staphopain B is inhibited by staphostatin B (SspC), which is probably required to protect staphylococcal cytoplasmic proteins from degradation by SspB. Functionally, cysteine protease that plays an important role in the inhibition of host innate immune response. Degrades host elastin, fibrogen, fibronectin and kininogen. Blocks phagocytosis of opsonised S.aureus by neutrophils and monocytes by inducing their death in a proteolytic activity-dependent manner. Decreases surface expression of the 'don't eat me' signal CD31 on neutrophils. Cleaves host galectin-3/LGALS3, thereby inhibiting the neutrophil-activating ability of the lectin. The sequence is that of Staphopain B (sspB) from Staphylococcus aureus.